A 143-amino-acid chain; its full sequence is Na(+)/H(+) antiporter subunit B (143 aa).

Helical transmembrane passes span 9–31 (LILQ…YLFL), 36–58 (APGG…LLAY), 71–93 (FIYV…FVFG), and 117–139 (ATIF…IQTI).

It belongs to the CPA3 antiporters (TC 2.A.63) subunit B family. Forms a heterooligomeric complex that consists of seven subunits: MrpA, MrpB, MrpC, MrpD, MrpE, MrpF and MrpG.

Its subcellular location is the cell membrane. Mrp complex is a Na(+)/H(+) antiporter that is considered to be the major Na(+) excretion system in B.subtilis. Has a major role in Na(+) resistance and a minor role in Na(+)- and K(+)-dependent pH homeostasis as compared to TetB. MrpA may be the actual Na(+)/H(+) antiporter, although the six other Mrp proteins are all required for Na(+)/H(+) antiport activity and Na(+) resistance. MrpA is required for initiation of sporulation when external Na(+) concentration increases. Also transports Li(+) but not K(+), Ca(2+) or Mg(2+). The protein is Na(+)/H(+) antiporter subunit B (mrpB) of Bacillus subtilis (strain 168).